Here is a 669-residue protein sequence, read N- to C-terminus: Glutamate--cysteine ligase (669 aa).

This sequence belongs to the glutamate--cysteine ligase type 3 family. Heterodimer of a catalytic heavy chain and a regulatory light chain.

It carries out the reaction L-cysteine + L-glutamate + ATP = gamma-L-glutamyl-L-cysteine + ADP + phosphate + H(+). It participates in sulfur metabolism; glutathione biosynthesis; glutathione from L-cysteine and L-glutamate: step 1/2. Catalyzes the ATP-dependent ligation of L-glutamate and L-cysteine and participates in the first and rate-limiting step in glutathione biosynthesis. This Schizosaccharomyces pombe (strain 972 / ATCC 24843) (Fission yeast) protein is Glutamate--cysteine ligase (gcs1).